The following is a 344-amino-acid chain: L-rhamnose-proton symporter (344 aa).

The next 10 membrane-spanning stretches (helical) occupy residues 4-24 (AITM…CFYA), 38-58 (WSVG…ALLL), 68-88 (FSLS…IGNI), 101-121 (MGIG…TPII), 137-157 (TLLG…AGQL), 175-195 (LVLA…MNAA), 214-234 (LPSY…FCFI), 259-279 (VLLS…YAWG), 290-310 (ISWM…GLVL), and 323-343 (VLSL…MGMA).

The protein belongs to the L-rhamnose transporter (TC 2.A.7.6) family.

The protein resides in the cell inner membrane. The enzyme catalyses L-rhamnopyranose(in) + H(+)(in) = L-rhamnopyranose(out) + H(+)(out). Functionally, uptake of L-rhamnose across the cytoplasmic membrane with the concomitant transport of protons into the cell (symport system). The polypeptide is L-rhamnose-proton symporter (Escherichia coli O17:K52:H18 (strain UMN026 / ExPEC)).